Here is a 521-residue protein sequence, read N- to C-terminus: Bifunctional purine biosynthesis protein PurH (521 aa).

The 145-residue stretch at 1–145 (MIKQALISVS…KNHRDVTVVV (145 aa)) folds into the MGS-like domain.

This sequence belongs to the PurH family.

The catalysed reaction is (6R)-10-formyltetrahydrofolate + 5-amino-1-(5-phospho-beta-D-ribosyl)imidazole-4-carboxamide = 5-formamido-1-(5-phospho-D-ribosyl)imidazole-4-carboxamide + (6S)-5,6,7,8-tetrahydrofolate. It catalyses the reaction IMP + H2O = 5-formamido-1-(5-phospho-D-ribosyl)imidazole-4-carboxamide. Its pathway is purine metabolism; IMP biosynthesis via de novo pathway; 5-formamido-1-(5-phospho-D-ribosyl)imidazole-4-carboxamide from 5-amino-1-(5-phospho-D-ribosyl)imidazole-4-carboxamide (10-formyl THF route): step 1/1. The protein operates within purine metabolism; IMP biosynthesis via de novo pathway; IMP from 5-formamido-1-(5-phospho-D-ribosyl)imidazole-4-carboxamide: step 1/1. In Burkholderia pseudomallei (strain 1106a), this protein is Bifunctional purine biosynthesis protein PurH.